A 231-amino-acid polypeptide reads, in one-letter code: Urease accessory protein UreE (231 aa).

The interval 185–231 (VASPLDEPHGSGLHIHGIHSHGEGHSHGDHDHDHSHSHGDHDHDHKH) is disordered. The segment covering 204-231 (SHGEGHSHGDHDHDHSHSHGDHDHDHKH) has biased composition (basic and acidic residues).

This sequence belongs to the UreE family.

It is found in the cytoplasm. Involved in urease metallocenter assembly. Binds nickel. Probably functions as a nickel donor during metallocenter assembly. The polypeptide is Urease accessory protein UreE (Yersinia pseudotuberculosis serotype O:1b (strain IP 31758)).